The chain runs to 133 residues: p53 and DNA damage-regulated protein 1 (133 aa).

The protein belongs to the prefoldin subunit beta family. As to quaternary structure, component of the PAQosome complex which is responsible for the biogenesis of several protein complexes and which consists of R2TP complex members RUVBL1, RUVBL2, RPAP3 and PIH1D1, URI complex members PFDN2, PFDN6, PDRG1, UXT and URI1 as well as ASDURF, POLR2E and DNAAF10/WDR92.

The protein localises to the cytoplasm. Functionally, may play a role in chaperone-mediated protein folding. The polypeptide is p53 and DNA damage-regulated protein 1 (Pdrg1) (Rattus norvegicus (Rat)).